Here is a 358-residue protein sequence, read N- to C-terminus: NADH-quinone oxidoreductase subunit H (358 aa).

A run of 8 helical transmembrane segments spans residues 20-40, 95-115, 128-148, 168-188, 206-226, 253-273, 290-310, and 334-354; these read ITVGLVVSVIVKIVIILIPLI, ALFYIGPIMSLAPSFAAWAVI, IGLLYILMITSLSVYGVIIAG, ISYEIAMSAALVCVVMVSGSM, VFSWNWLPLFPIFIVYLISAV, GFAFALFFLAEYIFMILISAL, WGFIGTPSAFWMFVKMAAVLY, and VLIPIGFAYIVILGLWMISPL.

Belongs to the complex I subunit 1 family. NDH-1 is composed of 14 different subunits. Subunits NuoA, H, J, K, L, M, N constitute the membrane sector of the complex.

It is found in the cell inner membrane. It carries out the reaction a quinone + NADH + 5 H(+)(in) = a quinol + NAD(+) + 4 H(+)(out). Its function is as follows. NDH-1 shuttles electrons from NADH, via FMN and iron-sulfur (Fe-S) centers, to quinones in the respiratory chain. The immediate electron acceptor for the enzyme in this species is believed to be ubiquinone. Couples the redox reaction to proton translocation (for every two electrons transferred, four hydrogen ions are translocated across the cytoplasmic membrane), and thus conserves the redox energy in a proton gradient. This subunit may bind ubiquinone. The chain is NADH-quinone oxidoreductase subunit H from Neisseria meningitidis serogroup A / serotype 4A (strain DSM 15465 / Z2491).